Here is a 423-residue protein sequence, read N- to C-terminus: 3-phosphoshikimate 1-carboxyvinyltransferase (423 aa).

3 residues coordinate 3-phosphoshikimate: Lys21, Ser22, and Arg26. Lys21 is a binding site for phosphoenolpyruvate. Residues Gly92 and Arg120 each coordinate phosphoenolpyruvate. The 3-phosphoshikimate site is built by Ser164, Gln166, Asp312, and Lys339. Phosphoenolpyruvate is bound at residue Gln166. The active-site Proton acceptor is Asp312. Residues Arg343 and Arg385 each coordinate phosphoenolpyruvate.

The protein belongs to the EPSP synthase family. In terms of assembly, monomer.

Its subcellular location is the cytoplasm. The catalysed reaction is 3-phosphoshikimate + phosphoenolpyruvate = 5-O-(1-carboxyvinyl)-3-phosphoshikimate + phosphate. It participates in metabolic intermediate biosynthesis; chorismate biosynthesis; chorismate from D-erythrose 4-phosphate and phosphoenolpyruvate: step 6/7. In terms of biological role, catalyzes the transfer of the enolpyruvyl moiety of phosphoenolpyruvate (PEP) to the 5-hydroxyl of shikimate-3-phosphate (S3P) to produce enolpyruvyl shikimate-3-phosphate and inorganic phosphate. This Thermoanaerobacter pseudethanolicus (strain ATCC 33223 / 39E) (Clostridium thermohydrosulfuricum) protein is 3-phosphoshikimate 1-carboxyvinyltransferase.